A 776-amino-acid polypeptide reads, in one-letter code: MNKKILQILEYDKVKEQFMNALTTAQGQQELKDLKPLTDKEKIQLLFDEVADFRLLTQENGLLNLGKTNDLTEILRRLELEASLSGKEFVEIKKVIQLGINIQRFFDEAENVETPSLAITLEKLVDLSALVKKLEIFDNAGSLYDNASLELMHIRASIKSHQSEIRKIMQEMLTKNLSSLSENVITIRNDRQVLPVKAENKNKIAGVVHDMSASGQTLYIEPNAVVSLNNKLNQKRIEERQEITRIYRELASQLKPYSFDIRQNAWLIGHIDFVRAKYLYLAANKATLPELTTDKDITLFAARHPLIEAKIVVTNDIKFDAGLNTIVITGPNTGGKTITLKTVGLLTILAQSGLPILAADGSRIHLFDDIFADIGDEQSIEQSLSTFSSHMTNIVHILAQADENSLVLFDELGAGTDPKEGAALAIAILENLRERNVKTMASTHYPELKAYGVETQRVINASMEFNIDKMQPTYHLQLGVPGRSNALEISRRLGLPETIISVASQQISDSEHDVNQMIEKLEEKTREVIESSRNIKKIERENQSLHKDLTKVYNQINREREFELEKAQKEAQEVVKKASLEAQEILKNLNDKAALKPHEIIAARKELEGLAPTIDFSKNKVLKKAKAQRGLKQGAEVNVTSYGQRGKLIRLEKDGRWTVQMGSITTRLNEDEFEVIESPEQIQAKTKNVSKKVTSKVKAQLDLRGMRYEEAELELDNYIDQALLANLIQITIVHGIGTGVIREMVQKKLQKHRHIKSYEYAPINAGGSGATIAILK.

Residue 330-337 (GPNTGGKT) participates in ATP binding. The region spanning 701–776 (LDLRGMRYEE…GSGATIAILK (76 aa)) is the Smr domain.

This sequence belongs to the DNA mismatch repair MutS family. MutS2 subfamily. Homodimer. Binds to stalled ribosomes, contacting rRNA.

Its function is as follows. Endonuclease that is involved in the suppression of homologous recombination and thus may have a key role in the control of bacterial genetic diversity. Acts as a ribosome collision sensor, splitting the ribosome into its 2 subunits. Detects stalled/collided 70S ribosomes which it binds and splits by an ATP-hydrolysis driven conformational change. Acts upstream of the ribosome quality control system (RQC), a ribosome-associated complex that mediates the extraction of incompletely synthesized nascent chains from stalled ribosomes and their subsequent degradation. Probably generates substrates for RQC. This Lactococcus lactis subsp. lactis (strain IL1403) (Streptococcus lactis) protein is Endonuclease MutS2.